The following is a 201-amino-acid chain: Prostamide/prostaglandin F synthase (201 aa).

A Phosphotyrosine modification is found at tyrosine 108.

The protein belongs to the peroxiredoxin-like PRXL2 family. Prostamide/prostaglandin F synthase subfamily.

It is found in the cytoplasm. The protein localises to the cytosol. It catalyses the reaction prostaglandin H2 + [thioredoxin]-dithiol = prostaglandin F2alpha + [thioredoxin]-disulfide. The catalysed reaction is prostamide F2alpha + [thioredoxin]-disulfide = prostamide H2 + [thioredoxin]-dithiol. Functionally, catalyzes the reduction of prostaglandin-ethanolamide H(2) (prostamide H(2)) to prostamide F(2alpha) with NADPH as proton donor. Also able to reduce prostaglandin H(2) to prostaglandin F(2alpha). The polypeptide is Prostamide/prostaglandin F synthase (PRXL2B) (Bos taurus (Bovine)).